A 450-amino-acid chain; its full sequence is UDP-N-acetylmuramoylalanine--D-glutamate ligase (450 aa).

An ATP-binding site is contributed by 119-125 (GSNGKTT).

This sequence belongs to the MurCDEF family.

The protein localises to the cytoplasm. It carries out the reaction UDP-N-acetyl-alpha-D-muramoyl-L-alanine + D-glutamate + ATP = UDP-N-acetyl-alpha-D-muramoyl-L-alanyl-D-glutamate + ADP + phosphate + H(+). Its pathway is cell wall biogenesis; peptidoglycan biosynthesis. Cell wall formation. Catalyzes the addition of glutamate to the nucleotide precursor UDP-N-acetylmuramoyl-L-alanine (UMA). The chain is UDP-N-acetylmuramoylalanine--D-glutamate ligase from Streptococcus pneumoniae (strain ATCC 700669 / Spain 23F-1).